Here is a 400-residue protein sequence, read N- to C-terminus: Methylthioribose kinase (400 aa).

Residues Asn-40, Lys-57, and Glu-111–Leu-113 each bind ATP. Asp-229 is a substrate binding site. ATP is bound at residue Asp-246–Glu-248. Arg-344 is a substrate binding site.

Belongs to the methylthioribose kinase family. Homodimer.

It carries out the reaction 5-(methylsulfanyl)-D-ribose + ATP = 5-(methylsulfanyl)-alpha-D-ribose 1-phosphate + ADP + H(+). It participates in amino-acid biosynthesis; L-methionine biosynthesis via salvage pathway; S-methyl-5-thio-alpha-D-ribose 1-phosphate from S-methyl-5'-thioadenosine (hydrolase route): step 2/2. In terms of biological role, catalyzes the phosphorylation of methylthioribose into methylthioribose-1-phosphate. This is Methylthioribose kinase from Pectobacterium atrosepticum (strain SCRI 1043 / ATCC BAA-672) (Erwinia carotovora subsp. atroseptica).